A 64-amino-acid chain; its full sequence is Small ribosomal subunit protein bS21 (64 aa).

The segment at 37–64 is disordered; that stretch reads EKPSVKRKRKEKEAQRRLRKKMRMMKKA. Residues 53–64 are compositionally biased toward basic residues; that stretch reads RLRKKMRMMKKA.

The protein belongs to the bacterial ribosomal protein bS21 family.

This is Small ribosomal subunit protein bS21 from Syntrophotalea carbinolica (strain DSM 2380 / NBRC 103641 / GraBd1) (Pelobacter carbinolicus).